The following is a 47-amino-acid chain: Large ribosomal subunit protein bL34 (47 aa).

The segment at 1–47 (MVTEGLKPHISIKKKKRKSGFLARMRTKSGRKIIARRRRKGRKRLAP) is disordered. Residues 10–47 (ISIKKKKRKSGFLARMRTKSGRKIIARRRRKGRKRLAP) are compositionally biased toward basic residues.

This sequence belongs to the bacterial ribosomal protein bL34 family.

The polypeptide is Large ribosomal subunit protein bL34 (rpmH) (Aquifex aeolicus (strain VF5)).